Reading from the N-terminus, the 158-residue chain is Eukaryotic translation initiation factor 5A-1 (158 aa).

Residues 1–10 are compositionally biased toward basic and acidic residues; it reads MSDEEHHFES. The segment at 1–21 is disordered; that stretch reads MSDEEHHFESSDAGASKTYPQ. Residue S2 is modified to Phosphoserine. K51 is modified (hypusine).

Belongs to the eIF-5A family. Lys-51 undergoes hypusination, a unique post-translational modification that consists in the addition of a butylamino group from spermidine to lysine side chain, leading to the formation of the unusual amino acid hypusine. eIF-5As are the only known proteins to undergo this modification, which is essential for their function. Expressed in leaf vasculature and inflorescence stems. Present in xylem tissue but not in phloem, and in developing vessel members, but not in mature vessels members. Detected in anthers.

In terms of biological role, translation factor that promotes translation elongation and termination, particularly upon ribosome stalling at specific amino acid sequence contexts. Binds between the exit (E) and peptidyl (P) site of the ribosome and promotes rescue of stalled ribosome: specifically required for efficient translation of polyproline-containing peptides as well as other motifs that stall the ribosome. Acts as a ribosome quality control (RQC) cofactor by joining the RQC complex to facilitate peptidyl transfer during CAT tailing step. Involved in xylogenesis. This chain is Eukaryotic translation initiation factor 5A-1 (ELF5A-1), found in Arabidopsis thaliana (Mouse-ear cress).